Reading from the N-terminus, the 198-residue chain is NAD(P)H dehydrogenase (quinone) (198 aa).

Residues 4 to 189 form the Flavodoxin-like domain; that stretch reads ILVLYYSMYG…SIARYQGEYV (186 aa). Residues 10–15 and 78–80 each bind FMN; these read SMYGHI and TRF. Residue Tyr-12 coordinates NAD(+). Residue Trp-98 coordinates substrate. FMN-binding positions include 113-118 and His-133; that span reads STGTGG.

Belongs to the WrbA family. The cofactor is FMN.

It catalyses the reaction a quinone + NADH + H(+) = a quinol + NAD(+). The catalysed reaction is a quinone + NADPH + H(+) = a quinol + NADP(+). This is NAD(P)H dehydrogenase (quinone) from Salmonella paratyphi B (strain ATCC BAA-1250 / SPB7).